Consider the following 249-residue polypeptide: Probable phosphatase Spea_1436 (249 aa).

Residues His8, His10, His16, His41, Glu74, His102, His132, Asp193, and His195 each coordinate Zn(2+).

Belongs to the PHP family. Zn(2+) is required as a cofactor.

This Shewanella pealeana (strain ATCC 700345 / ANG-SQ1) protein is Probable phosphatase Spea_1436.